The sequence spans 232 residues: Orotidine 5'-phosphate decarboxylase (232 aa).

Substrate-binding positions include D11, K33, 60 to 69, T119, R180, Q189, G209, and R210; that span reads DLKLYDIPNT. The active-site Proton donor is the K62.

It belongs to the OMP decarboxylase family. Type 1 subfamily. Homodimer.

It carries out the reaction orotidine 5'-phosphate + H(+) = UMP + CO2. The protein operates within pyrimidine metabolism; UMP biosynthesis via de novo pathway; UMP from orotate: step 2/2. Functionally, catalyzes the decarboxylation of orotidine 5'-monophosphate (OMP) to uridine 5'-monophosphate (UMP). The polypeptide is Orotidine 5'-phosphate decarboxylase (Wigglesworthia glossinidia brevipalpis).